A 198-amino-acid polypeptide reads, in one-letter code: Putative 3-methyladenine DNA glycosylase (198 aa).

It belongs to the DNA glycosylase MPG family.

This Natranaerobius thermophilus (strain ATCC BAA-1301 / DSM 18059 / JW/NM-WN-LF) protein is Putative 3-methyladenine DNA glycosylase.